The chain runs to 1180 residues: RecBCD enzyme subunit RecB (1180 aa).

Residues 2–450 (SDVAETLDPL…YTLDTNWRSA (449 aa)) enclose the UvrD-like helicase ATP-binding domain. The segment at 2–853 (SDVAETLDPL…KGEPQDAAGL (852 aa)) is ATPase, DNA-binding and helicase activity, interacts with RecC. 23-30 (ASAGTGKT) is an ATP binding site. The DNA-binding element occupies 252 to 254 (IDR). Trp447 contacts ATP. Residues 480–746 (SAGKNQALRF…QIVTIHKSKG (267 aa)) enclose the UvrD-like helicase C-terminal domain. 3 consecutive DNA-binding regions follow at residues 511 to 512 (VG), 560 to 561 (SR), and Arg761. The interval 900-1180 (NWRVTSYSGL…MFAGMTLEEA (281 aa)) is nuclease activity, interacts with RecD and RecA. Mg(2+) contacts are provided by His956, Asp1067, Asp1080, and Tyr1081. The active-site For nuclease activity is Asp1080.

It belongs to the helicase family. UvrD subfamily. Heterotrimer of RecB, RecC and RecD. All subunits contribute to DNA-binding. The C-terminus interacts with RecA. Interacts with YgbT (Cas1). As to quaternary structure, (Microbial infection) Lambda virus GamS protein interacts with the enzyme without displacing any of the subunits. Mg(2+) is required as a cofactor.

It catalyses the reaction Exonucleolytic cleavage (in the presence of ATP) in either 5'- to 3'- or 3'- to 5'-direction to yield 5'-phosphooligonucleotides.. The enzyme catalyses Couples ATP hydrolysis with the unwinding of duplex DNA by translocating in the 3'-5' direction.. The catalysed reaction is ATP + H2O = ADP + phosphate + H(+). Its activity is regulated as follows. After reacting with DNA bearing a Chi site the holoenzyme is disassembled and loses exonuclease activity, DNA unwinding and Chi-directed DNA cleavage; RecB remains complexed with ssDNA, which may prevent holoenzyme reassembly. High levels of Mg(2+) (13 mM MgCl(2+)) or incubation with DNase allows holoenzyme reassembly, suggesting it is DNA bound to RecB that prevents reassembly. (Microbial infection) RecBCD is inhibited by the lambda virus gam protein (both GamL and GamS isoforms); in vitro a short preincubation prior to adding DNA results in maximal inhibition. In terms of biological role, a helicase/nuclease that prepares dsDNA breaks (DSB) for recombinational DNA repair. Binds to DSBs and unwinds DNA via a rapid (&gt;1 kb/second) and highly processive (&gt;30 kb) ATP-dependent bidirectional helicase. Unwinds dsDNA until it encounters a Chi (crossover hotspot instigator, 5'-GCTGGTGG-3') sequence from the 3' direction. Cuts ssDNA a few nucleotides 3' to Chi site, by nicking one strand or switching the strand degraded (depending on the reaction conditions). The properties and activities of the enzyme are changed at Chi. The Chi-altered holoenzyme produces a long 3'-ssDNA overhang which facilitates RecA-binding to the ssDNA for homologous DNA recombination and repair. Holoenzyme degrades any linearized DNA that is unable to undergo homologous recombination. In the holoenzyme this subunit contributes ATPase, 3'-5' helicase, exonuclease activity and loads RecA onto ssDNA. The RecBC complex requires the RecD subunit for nuclease activity, but can translocate along ssDNA in both directions. The RecBCD complex does not unwind G-quadruplex DNA. Probably interacts with a component of retron Ec48 which moniters RecBCD stability; when RecB is missing or impaired the retron is activated and becomes toxic. This chain is RecBCD enzyme subunit RecB, found in Escherichia coli (strain K12).